Reading from the N-terminus, the 123-residue chain is Ribonuclease P protein component (123 aa).

This sequence belongs to the RnpA family. In terms of assembly, consists of a catalytic RNA component (M1 or rnpB) and a protein subunit.

It catalyses the reaction Endonucleolytic cleavage of RNA, removing 5'-extranucleotides from tRNA precursor.. In terms of biological role, RNaseP catalyzes the removal of the 5'-leader sequence from pre-tRNA to produce the mature 5'-terminus. It can also cleave other RNA substrates such as 4.5S RNA. The protein component plays an auxiliary but essential role in vivo by binding to the 5'-leader sequence and broadening the substrate specificity of the ribozyme. The polypeptide is Ribonuclease P protein component (Streptococcus pneumoniae (strain Hungary19A-6)).